Here is a 309-residue protein sequence, read N- to C-terminus: Tumor necrosis factor ligand superfamily member 13B (309 aa).

Residues 1–47 (MDESAKTLPPPCLCFCSEKGEDMKVGYDPITPQKEEGAWFGICRDGR) are Cytoplasmic-facing. A helical; Signal-anchor for type II membrane protein membrane pass occupies residues 48–68 (LLAATLLLALLSSSFTAMSLY). The Extracellular portion of the chain corresponds to 69–309 (QLAALQADLM…DTFFGALKLL (241 aa)). A disordered region spans residues 110 to 140 (PAAPRPHNSSRGHRNRRAFQGPEETEQDVDL). Residues N117 and N266 are each glycosylated (N-linked (GlcNAc...) asparagine). Basic residues predominate over residues 117–126 (NSSRGHRNRR). The THD domain maps to 169-308 (DCLQLIADSD…DDTFFGALKL (140 aa)). A disulfide bridge connects residues C256 and C269.

It belongs to the tumor necrosis factor family. Homotrimer. Isoform 2 heteromultimerizes with isoform 1, probably limiting the amount of functional isoform 1 on the cell surface. The soluble form derives from the membrane form by proteolytic processing. Post-translationally, isoform 2 is not efficiently shed from the membrane unlike isoform 1. Isoform 2 is expressed in many myeloid cell lines.

Its subcellular location is the cell membrane. It localises to the secreted. Its function is as follows. Cytokine that binds to TNFRSF13B/TACI and TNFRSF17/BCMA. TNFSF13/APRIL binds to the same 2 receptors. Together, they form a 2 ligands -2 receptors pathway involved in the stimulation of B- and T-cell function and the regulation of humoral immunity. A third B-cell specific BAFF-receptor (BAFFR/BR3) promotes the survival of mature B-cells and the B-cell response. Functionally, isoform 2 seems to inhibit isoform 1 secretion and bioactivity. The protein is Tumor necrosis factor ligand superfamily member 13B (Tnfsf13b) of Mus musculus (Mouse).